A 101-amino-acid polypeptide reads, in one-letter code: MNPTIAKITCPLCGNDEATVHRQKDRKKKLYYRCTGATFADGCGTIQCTGASGQAFISKNMKPLNGVESEDAAIEAAEDAKAEQVKPNKKRSFLDFLVDDE.

May regulate the expression of phage structural components with protein P13. This is an uncharacterized protein from Pseudoalteromonas phage PM2 (Bacteriophage PM2).